The primary structure comprises 189 residues: Elongation factor P-like protein (189 aa).

It belongs to the elongation factor P family.

The protein is Elongation factor P-like protein of Vibrio atlanticus (strain LGP32) (Vibrio splendidus (strain Mel32)).